Consider the following 803-residue polypeptide: Translation initiation factor IF-2 (803 aa).

Over residues 65–75 (PDKVEEKKEHT) the composition is skewed to basic and acidic residues. Residues 65–186 (PDKVEEKKEH…PKSRKSKTLK (122 aa)) are disordered. Over residues 175 to 185 (NKPKSRKSKTL) the composition is skewed to basic residues. Positions 300-468 (IRPPVVTIMG…ILLTADAALE (169 aa)) constitute a tr-type G domain. Residues 309–316 (GHVDHGKT) form a G1 region. Residue 309–316 (GHVDHGKT) participates in GTP binding. Positions 334-338 (GITQH) are G2. Residues 355-358 (DTPG) are G3. Residues 355 to 359 (DTPGH) and 409 to 412 (NKID) each bind GTP. The interval 409 to 412 (NKID) is G4. A G5 region spans residues 445–447 (SAK).

The protein belongs to the TRAFAC class translation factor GTPase superfamily. Classic translation factor GTPase family. IF-2 subfamily.

Its subcellular location is the cytoplasm. Its function is as follows. One of the essential components for the initiation of protein synthesis. Protects formylmethionyl-tRNA from spontaneous hydrolysis and promotes its binding to the 30S ribosomal subunits. Also involved in the hydrolysis of GTP during the formation of the 70S ribosomal complex. In Tropheryma whipplei (strain TW08/27) (Whipple's bacillus), this protein is Translation initiation factor IF-2.